The sequence spans 849 residues: Serine/threonine-protein phosphatase 4 regulatory subunit 3B (849 aa).

Residues 1 to 100 (MSDTRRRVKV…DEIWEKICQV (100 aa)) form the WH1 domain. Phosphoserine is present on residues Ser117 and Ser695. Residues 714–724 (EMWFNEDEEEE) are compositionally biased toward acidic residues. The segment at 714-849 (EMWFNEDEEE…SPRKRPRLGS (136 aa)) is disordered. Over residues 733–764 (EKPKPEDDFPDNYEKFMETKKAKESEDKENLP) the composition is skewed to basic and acidic residues. The segment covering 776–818 (FSHSASAANGTNSKSVVAQIPPATSNGSSSKTTNLPTSVTATK) has biased composition (polar residues). Residues 827–838 (YPDDEEEDEEEE) are compositionally biased toward acidic residues. A Phosphoserine modification is found at Ser840.

This sequence belongs to the SMEK family. As to quaternary structure, serine/threonine-protein phosphatase 4 (PP4) occurs in different assemblies of the catalytic and one or more regulatory subunits. Component of the PP4 complex PPP4C-PPP4R2-PPP4R3B. In terms of tissue distribution, moderately expressed in tissues and specific brain regions examined.

It is found in the cytoplasm. The protein resides in the cytoskeleton. The protein localises to the microtubule organizing center. It localises to the centrosome. Its subcellular location is the nucleus. In terms of biological role, regulatory subunit of serine/threonine-protein phosphatase 4 (PP4). May regulate the activity of PPP4C at centrosomal microtubule organizing centers. This is Serine/threonine-protein phosphatase 4 regulatory subunit 3B from Homo sapiens (Human).